The chain runs to 312 residues: tRNA dimethylallyltransferase (312 aa).

Glycine 11–serine 18 contributes to the ATP binding site. Threonine 13–serine 18 is a substrate binding site. Interaction with substrate tRNA regions lie at residues aspartate 36–threonine 39, glutamine 160–arginine 164, and arginine 243–arginine 248.

It belongs to the IPP transferase family. In terms of assembly, monomer. The cofactor is Mg(2+).

It catalyses the reaction adenosine(37) in tRNA + dimethylallyl diphosphate = N(6)-dimethylallyladenosine(37) in tRNA + diphosphate. In terms of biological role, catalyzes the transfer of a dimethylallyl group onto the adenine at position 37 in tRNAs that read codons beginning with uridine, leading to the formation of N6-(dimethylallyl)adenosine (i(6)A). The chain is tRNA dimethylallyltransferase from Bordetella avium (strain 197N).